The sequence spans 547 residues: Probable bifunctional tRNA threonylcarbamoyladenosine biosynthesis protein (547 aa).

Residues 1–329 (MKKTFILGIE…FRTDDVKVTW (329 aa)) form a kae1 region. Fe cation is bound by residues H113, H117, and Y134. L-threonylcarbamoyladenylate-binding positions include 134–138 (YVSGA), D166, G179, E183, and N262. D290 provides a ligand contact to Fe cation. One can recognise a Protein kinase domain in the interval 340 to 547 (EISPETFFRM…EEIKKRARYA (208 aa)). ATP is bound by residues 355–363 (LDNGAEAVV) and K377. D464 serves as the catalytic Proton acceptor; for kinase activity.

In the N-terminal section; belongs to the KAE1 / TsaD family. It in the C-terminal section; belongs to the protein kinase superfamily. Tyr protein kinase family. BUD32 subfamily. As to quaternary structure, component of the KEOPS complex that consists of Kae1, Bud32, Cgi121 and Pcc1; the whole complex dimerizes. Fe(2+) serves as cofactor.

It localises to the cytoplasm. It catalyses the reaction L-seryl-[protein] + ATP = O-phospho-L-seryl-[protein] + ADP + H(+). The catalysed reaction is L-threonyl-[protein] + ATP = O-phospho-L-threonyl-[protein] + ADP + H(+). The enzyme catalyses L-threonylcarbamoyladenylate + adenosine(37) in tRNA = N(6)-L-threonylcarbamoyladenosine(37) in tRNA + AMP + H(+). In terms of biological role, required for the formation of a threonylcarbamoyl group on adenosine at position 37 (t(6)A37) in tRNAs that read codons beginning with adenine. Is a component of the KEOPS complex that is probably involved in the transfer of the threonylcarbamoyl moiety of threonylcarbamoyl-AMP (TC-AMP) to the N6 group of A37. The Kae1 domain likely plays a direct catalytic role in this reaction. The Bud32 domain probably displays kinase activity that regulates Kae1 function. This chain is Probable bifunctional tRNA threonylcarbamoyladenosine biosynthesis protein, found in Methanosarcina mazei (strain ATCC BAA-159 / DSM 3647 / Goe1 / Go1 / JCM 11833 / OCM 88) (Methanosarcina frisia).